The primary structure comprises 416 residues: GTPase ERA1, chloroplastic (416 aa).

Residues 1 to 53 (MELGLALRLVAPPPLLPCLSRRALSLPPDFVSSRVLRGRRIHASRLKHGAGVV) constitute a chloroplast transit peptide. The Era-type G domain occupies 117–287 (RSGYVAVLGK…KEWILSKLPL (171 aa)). Residues 125–132 (GKPNVGKS) are G1. Position 125 to 132 (125 to 132 (GKPNVGKS)) interacts with GTP. Residues 151–155 (QTTRH) are G2. Positions 172-175 (DTPG) are G3. GTP is bound by residues 172-176 (DTPGV) and 237-240 (NKKD). The G4 stretch occupies residues 237 to 240 (NKKD). Residues 266 to 268 (ISA) form a G5 region. Residues 318 to 395 (YRQEIPYSCQ…YLEVEVKVKE (78 aa)) enclose the KH type-2 domain.

Belongs to the TRAFAC class TrmE-Era-EngA-EngB-Septin-like GTPase superfamily. Era GTPase family.

It localises to the plastid. Its subcellular location is the chloroplast stroma. The protein localises to the chloroplast nucleoid. Its function is as follows. Nuclear genome-encoded probable GTPase involved in ribosome biogenesis in chloroplasts. Plays a role in 16S rRNA maturation in plastids and may contribute to the assembly of the small (30S) ribosomal subunit. This Zea mays (Maize) protein is GTPase ERA1, chloroplastic.